The following is a 386-amino-acid chain: MYNATNSRSRMFRYEVVGLRQTAETEKTNYAIRNSGSQFFNVPYDRMNQFMQQITRWGGKIVSIQPLNGTVAPLAATTEPAANNGAAPVKEKKVDIPVNIYRPNNPCIGKVISNEELVREGGEGTVKHIIFDISGTELRYLEGQSIGIIPAGTDANGKPHKLRLYSIASTRHGDFQDDKTVSLCVRRLEYKDKETGETIYGVCSSYLNQLQPGDEVKITGPVGKEMLLSDDPEATIIMLATGTGIAPFRAFLWRMFKENNPDYQFKGLAWLFFGVAYTANILYKDELEAIQAQYPDHFRLTYAISREQKTPDGGKMYIQGRIAEHADEIWQLLQKKNTHVYMCGLRGMEPGIDEAMTAAAAKNGADWQEFLKGTLKKEGRWHVETY.

In terms of domain architecture, CpcD-like spans 9–67 (SRMFRYEVVGLRQTAETEKTNYAIRNSGSQFFNVPYDRMNQFMQQITRWGGKIVSIQPL). The 125-residue stretch at 104–228 (NNPCIGKVIS…TGPVGKEMLL (125 aa)) folds into the FAD-binding FR-type domain. Residues 163–166 (RLYS), 184–186 (CVR), Tyr190, 202–204 (VCS), and Thr243 contribute to the FAD site. The NADP(+) site is built by Ser166 and Arg186. Residues Thr243, 275–276 (VA), 305–306 (SR), 315–319 (KMYIQ), 344–345 (GL), and Glu384 contribute to the NADP(+) site.

This sequence belongs to the ferredoxin--NADP reductase type 1 family. FAD is required as a cofactor.

It localises to the cellular thylakoid membrane. The enzyme catalyses 2 reduced [2Fe-2S]-[ferredoxin] + NADP(+) + H(+) = 2 oxidized [2Fe-2S]-[ferredoxin] + NADPH. This chain is Ferredoxin--NADP reductase (petH), found in Thermosynechococcus vestitus (strain NIES-2133 / IAM M-273 / BP-1).